A 212-amino-acid polypeptide reads, in one-letter code: Putative protein phosphatase 2C 53 (212 aa).

In terms of domain architecture, PPM-type phosphatase spans 1–208 (MEDRFSAITN…DDISVMLIPL (208 aa)). Asp199 is a binding site for Mn(2+).

The protein belongs to the PP2C family. Mg(2+) is required as a cofactor. Requires Mn(2+) as cofactor.

It carries out the reaction O-phospho-L-seryl-[protein] + H2O = L-seryl-[protein] + phosphate. The enzyme catalyses O-phospho-L-threonyl-[protein] + H2O = L-threonyl-[protein] + phosphate. In Arabidopsis thaliana (Mouse-ear cress), this protein is Putative protein phosphatase 2C 53.